A 364-amino-acid chain; its full sequence is S-adenosylmethionine:tRNA ribosyltransferase-isomerase (364 aa).

Positions 344–364 are disordered; it reads ASDKMQETSGRGERPRFDHEI.

The protein belongs to the QueA family. Monomer.

The protein resides in the cytoplasm. It catalyses the reaction 7-aminomethyl-7-carbaguanosine(34) in tRNA + S-adenosyl-L-methionine = epoxyqueuosine(34) in tRNA + adenine + L-methionine + 2 H(+). It participates in tRNA modification; tRNA-queuosine biosynthesis. In terms of biological role, transfers and isomerizes the ribose moiety from AdoMet to the 7-aminomethyl group of 7-deazaguanine (preQ1-tRNA) to give epoxyqueuosine (oQ-tRNA). This Thioalkalivibrio sulfidiphilus (strain HL-EbGR7) protein is S-adenosylmethionine:tRNA ribosyltransferase-isomerase.